Reading from the N-terminus, the 520-residue chain is Maturase K (520 aa).

This sequence belongs to the intron maturase 2 family. MatK subfamily.

Its subcellular location is the plastid. It localises to the chloroplast. In terms of biological role, usually encoded in the trnK tRNA gene intron. Probably assists in splicing its own and other chloroplast group II introns. The chain is Maturase K from Cycas taitungensis (Prince sago).